The sequence spans 333 residues: Homocysteine S-methyltransferase 2 (333 aa).

The 320-residue stretch at 8-327 (SMKDFLKQTG…TTIRAIHKRL (320 aa)) folds into the Hcy-binding domain. Residues C245, C312, and C313 each contribute to the Zn(2+) site.

In terms of assembly, monomer. Zn(2+) is required as a cofactor. Expressed predominantly in roots. Expressed in rosette leaves, cauline leaves and developing seeds.

It catalyses the reaction S-methyl-L-methionine + L-homocysteine = 2 L-methionine + H(+). In terms of biological role, catalyzes methyl transfer from S-methylmethionine (SMM) to adenosyl-L-homocysteine (AdoMet). SMM degradation (by HMT-1, HMT-2 and HMT-3) and biosynthesis (by MMT1) constitute the SMM cycle in plants, which is probably required to achieve short term control of AdoMet level. This is Homocysteine S-methyltransferase 2 (HMT-2) from Arabidopsis thaliana (Mouse-ear cress).